The following is a 238-amino-acid chain: D/L-lactic acid transporter (238 aa).

2 helical membrane passes run 2 to 22 and 39 to 59; these read VHQL…GVGV and IFAI…FGNV. Residues 62 to 64 carry the NPA 1 motif; the sequence is NPA. A run of 3 helical transmembrane segments spans residues 80–100, 135–155, and 158–178; these read FIPY…IVWI, FFVE…ISEI, and PGIV…GLGG. The NPA 2 motif lies at 185–187; that stretch reads NLA. The chain crosses the membrane as a helical span at residues 211–231; it reads YGIIVPGIAPFVGAAIAAWFM.

Belongs to the MIP/aquaporin (TC 1.A.8) family.

It is found in the cell membrane. Transporter that facilitates the transmembrane diffusion of D/L-lactic acid. Is involved in the cellular racemization of lactate and lactate metabolism. The transported molecule is indeed lactic acid and not the lactate anion, in agreement with the assumption that, with very few exceptions, MIPs (major intrinsic proteins) only facilitate the transport of uncharged solutes. Also facilitates urea and H(2)O(2) diffusion across membranes, but is not permeable to water, glycerol and dihydroxyacetone. The sequence is that of D/L-lactic acid transporter from Lactiplantibacillus plantarum (strain ATCC BAA-793 / NCIMB 8826 / WCFS1) (Lactobacillus plantarum).